Here is an 80-residue protein sequence, read N- to C-terminus: UPF0291 protein llmg_1475 (80 aa).

Belongs to the UPF0291 family.

Its subcellular location is the cytoplasm. This Lactococcus lactis subsp. cremoris (strain MG1363) protein is UPF0291 protein llmg_1475.